Reading from the N-terminus, the 360-residue chain is Peptide chain release factor 1 (360 aa).

Glutamine 235 is modified (N5-methylglutamine).

This sequence belongs to the prokaryotic/mitochondrial release factor family. Post-translationally, methylated by PrmC. Methylation increases the termination efficiency of RF1.

It localises to the cytoplasm. Its function is as follows. Peptide chain release factor 1 directs the termination of translation in response to the peptide chain termination codons UAG and UAA. This chain is Peptide chain release factor 1, found in Burkholderia vietnamiensis (strain G4 / LMG 22486) (Burkholderia cepacia (strain R1808)).